The following is a 376-amino-acid chain: 5-amino-6-(D-ribitylamino)uracil--L-tyrosine 4-hydroxyphenyl transferase 1 (376 aa).

The region spanning V50–H284 is the Radical SAM core domain. Residues C64, C68, and C71 each contribute to the [4Fe-4S] cluster site.

Belongs to the radical SAM superfamily. CofH family. As to quaternary structure, consists of two subunits, CofG and CofH. Requires [4Fe-4S] cluster as cofactor.

The catalysed reaction is 5-amino-6-(D-ribitylamino)uracil + L-tyrosine + S-adenosyl-L-methionine = 5-amino-5-(4-hydroxybenzyl)-6-(D-ribitylimino)-5,6-dihydrouracil + 2-iminoacetate + 5'-deoxyadenosine + L-methionine + H(+). It functions in the pathway cofactor biosynthesis; coenzyme F0 biosynthesis. Catalyzes the radical-mediated synthesis of 5-amino-5-(4-hydroxybenzyl)-6-(D-ribitylimino)-5,6-dihydrouracil from 5-amino-6-(D-ribitylamino)uracil and L-tyrosine. The chain is 5-amino-6-(D-ribitylamino)uracil--L-tyrosine 4-hydroxyphenyl transferase 1 from Methanosarcina barkeri (strain Fusaro / DSM 804).